A 380-amino-acid polypeptide reads, in one-letter code: O-methyltransferase ucdC (380 aa).

S-adenosyl-L-methionine-binding positions include 222-223, Asp-247, and Arg-283; that span reads GG. The active-site Proton acceptor is His-287.

Belongs to the class I-like SAM-binding methyltransferase superfamily. Cation-independent O-methyltransferase family. COMT subfamily.

Its pathway is secondary metabolite biosynthesis. Nonribosomal peptide synthetase that mediates the biosynthesis of usterphenyllins and uscandidusins, p-terphenyl derivatives. Within the pathway, ucdC catalyzes O-methylation of the terphenyl triol intermediate produced by ucdB to yield terphenyllin carrying two methoxy moieties at C-9 and C-12. The pathway begin with the biosynthesis of 4-hydroxyphenylpyruvate (HPPA) from L-tyrosine, possibly by the aminotransferase ucdG. The nonribosomal peptide synthetase ucdA then condenses two HPPA units to produce atromentin. The key step in this pathway is the reduction and dehydration of atromentin to form a terphenyl triol intermediate, performed by the NAD-dependent dehydrogenase ucdB. Further O-methylation by the methyltransferase ucdC forms terphenyllin carrying two methoxy moieties at C-9 and C-12, and subsequent dihydroxylation at C-3 of ring A and C-15 of ring C by the flavin-dependent oxygenase ucdD leads to 3,15-dihydroxyterphenyllin. Prenylation by ucdE at position C-5 of ring A forms usterphenyllin B, and is followed by a second prenylation at position C-14 of ring C to form usterphenyllin A. The following furan ring formation that leads to uscandidusins A and B was proven to be an unexpected spontaneous non-enzymatic reaction. This chain is O-methyltransferase ucdC, found in Aspergillus ustus.